A 36-amino-acid polypeptide reads, in one-letter code: MAASLLPSIFVPLVGLVFPAVAMASLFLYIEKEQVS.

Residues 9-29 (IFVPLVGLVFPAVAMASLFLY) form a helical membrane-spanning segment.

The protein belongs to the PsaI family.

It localises to the plastid. The protein localises to the chloroplast thylakoid membrane. Functionally, may help in the organization of the PsaL subunit. This is Photosystem I reaction center subunit VIII from Ostreococcus tauri.